The chain runs to 1119 residues: MKYSSFLLLFIYIFFILNNINAQSCPSTSSTWRPTMASFVTPTSPSIATIQPQLDFLLGKNNLVFMGQYGYSATSITDGPTGVANSFTMNYDTWGPAMHWLVVKTPVPALKANQNYEFSFGFKLGQVLGSYNKIASISVNFFNPADITDPNGGSQYFVTPAHPAVYSKTVTTGSWTSSTTFAQNIITLTPTVDIGLSIMAIQITRTSQTGPAITTMFVSNMKLSIPSRTVPAPPTNLITKDSELIAIPKPLSSLDAQDSTTCPYLATDLVHWHDPTIWTSGVVPLPSTSSNIIIPAGKKVLISPCSINQTGIYQKITIPATSELIFADASLTMNIQDIYVQGKFIMGTTKCRYNANINIVFNGAMTTVDTIAQYFGSKGIAVASGGFISVHGRQYHNTWTKLAATAWSGDNVIYIQDDVNWIVGQQVVVATSVYQDEKYPENEVMTIAAIQGKVIQFTEPLKYYHYGGQEYQAEVALLTRNIVFQSESSSAASSFGGHVLVSGEGQFAGIQLIRMGQRNIKGRYPLHFHMANTVSKSYISDCSVVSSYYRCYTIHATNNVTVTRNVAFDVNGHCYYLEDGVEMDNTLSFNFASYVHTIGTPAAGYNQYGQDFTQSSSLAQPADVAAGGFYITNAWNSFIGNAASGGWAGFSFPNLDAPIGNSINVPIVPKQFTTKVFQGNTAHSSGYFFEFGSSIYVGGDLSTGSDGLLVYNSGRISRETYLNGVESGGEIWMRFNNTKVYLSNRGIGMWGERVEVILLESHDSIRPGSLFGEAWLSDAIVNGQTGNLLSKTTDYSRQGFQFYDTYVKTILTNIIFRNFVHNPLSTSPEDDNRVIISMTHSDEFKPQFISATKNITIQGTAVSQYIGHRIFDTGSSRQFNFVDYDGTISGRSVPTIFGAHDKWWQFDNTCTYNNDWNSWVCNKGTYEVASVSVEVPGYMDRSGEYDATSNVGYIYLFGSGITDSRRMNVTRNVGITGISDFGWYLYWTVGTPSYIKLWLSEVPYGHYVFFAIPYPASTTFKVSCEYKYNSQHSYNFTQATSAAAVRSGDGKKYYFNGTHLFVKVINFVLNGSEYFSRGGAKINDVYWEFIVHITATNTVKPPVNGFYTGLTDVLPSSTL.

Residues 1 to 22 form the signal peptide; that stretch reads MKYSSFLLLFIYIFFILNNINA. Positions 276–404 constitute a G8 domain; the sequence is TIWTSGVVPL…YHNTWTKLAA (129 aa). N-linked (GlcNAc...) asparagine glycosylation is found at Asn-308, Asn-559, Asn-736, Asn-854, Asn-968, Asn-1035, Asn-1056, and Asn-1070.

Belongs to the comF family.

It localises to the secreted. In Dictyostelium discoideum (Social amoeba), this protein is G8 domain-containing protein DDB_G0288475.